The following is a 736-amino-acid chain: Oxysterol-binding protein-related protein 9 (736 aa).

Alanine 2 carries the post-translational modification N-acetylalanine. Positions 2–99 (ASIVEGPLSK…WIHALEETIL (98 aa)) constitute a PH domain. The segment at 209–368 (LEPVISTMPS…RDDDGEAGSV (160 aa)) is disordered. Over residues 253 to 274 (TPTPNSTGSGNSPPSSSLTPPS) the composition is skewed to low complexity. Phosphoserine occurs at positions 306, 324, 325, 326, and 329. Polar residues-rich tracts occupy residues 314–329 (SSGS…SGNS) and 336–348 (TESL…NGTS). Position 611 is a phosphoserine (serine 611).

The protein belongs to the OSBP family. Heterodimer with OSBPL11. Interacts with OSBPL10.

It is found in the late endosome membrane. Its subcellular location is the golgi apparatus. It localises to the trans-Golgi network membrane. The catalysed reaction is a 1,2-diacyl-sn-glycero-3-phospho-(1D-myo-inositol 4-phosphate)(out) + a 1,2-diacyl-sn-glycero-3-phospho-L-serine(in) = a 1,2-diacyl-sn-glycero-3-phospho-(1D-myo-inositol 4-phosphate)(in) + a 1,2-diacyl-sn-glycero-3-phospho-L-serine(out). In terms of biological role, interacts with OSBPL11 to function as lipid transfer proteins. Together they form a heterodimer that localizes at the ER-trans-Golgi membrane contact sites, and exchanges phosphatidylserine (1,2-diacyl-sn-glycero-3-phospho-L-serine, PS) for phosphatidylinositol-4-phosphate (1,2-diacyl-sn-glycero-3-phospho-(1D-myo-inositol 4-phosphate), PI(4)P) between the two organelles, a step that is critical for sphingomyelin synthesis in the Golgi complex. This chain is Oxysterol-binding protein-related protein 9 (Osbpl9), found in Mus musculus (Mouse).